We begin with the raw amino-acid sequence, 706 residues long: Maternal embryonic leucine zipper kinase (706 aa).

The region spanning 11–265 (YAVHDELGSG…VKKLLEHDWL (255 aa)) is the Protein kinase domain. Residues 17 to 25 (LGSGGFGKV) and Lys-40 each bind ATP. Asp-132 serves as the catalytic Proton acceptor. Disordered regions lie at residues 366–386 (LDKSGLEDDDSDPSSISSSSD), 433–493 (FTGR…SRGP), and 506–555 (SVYT…IGSA). Polar residues-rich tracts occupy residues 447-461 (SVRSSDSASLGSAAT) and 506-515 (SVYTTPNTRP). Residues 656–705 (QETVHGWMTVELEIVRLQMFDKVGIRRKRLKGDAFMYKKVCEKILQMAKI) form the KA1 domain.

This sequence belongs to the protein kinase superfamily. CAMK Ser/Thr protein kinase family. SNF1 subfamily. Post-translationally, may be phosphorylated at Thr-169 by par-4 and/or autophosphorylated which likely results in its activation. Phosphorylation is not required for co-localization with the centrosome.

The protein resides in the cytoplasm. The protein localises to the cytoskeleton. It localises to the microtubule organizing center. It is found in the centrosome. The catalysed reaction is L-seryl-[protein] + ATP = O-phospho-L-seryl-[protein] + ADP + H(+). It catalyses the reaction L-threonyl-[protein] + ATP = O-phospho-L-threonyl-[protein] + ADP + H(+). In terms of biological role, serine/threonine-protein kinase involved in cell autonomous neuroblast asymmetric divisions that generate one precursor cell and one apoptotic cell by controlling spindle positioning, myosin distribution and the segregation of cell fate determinants. Plays a role in neural fate specification in several dopaminergic linages, acting in concert with ham-1. Involved in phosphorylation of multiple proteins associated with key developmental processes, including the cell cycle, apoptosis, endocytosis, and asymmetric cell division. Promotes cell shedding during embryogenesis, probably through the endocytosis-mediated removal of cell adhesion molecules such as hmp-1 from the cell surface. May act downstream of par-4/strd-1/mop-25 to regulate cell shedding. In Caenorhabditis elegans, this protein is Maternal embryonic leucine zipper kinase.